The following is a 309-amino-acid chain: Ribosomal RNA small subunit methyltransferase H (309 aa).

S-adenosyl-L-methionine contacts are provided by residues 39-41 (GGH), Asp59, Phe83, Asp100, and Gln107.

Belongs to the methyltransferase superfamily. RsmH family.

The protein localises to the cytoplasm. It catalyses the reaction cytidine(1402) in 16S rRNA + S-adenosyl-L-methionine = N(4)-methylcytidine(1402) in 16S rRNA + S-adenosyl-L-homocysteine + H(+). Functionally, specifically methylates the N4 position of cytidine in position 1402 (C1402) of 16S rRNA. This Delftia acidovorans (strain DSM 14801 / SPH-1) protein is Ribosomal RNA small subunit methyltransferase H.